The chain runs to 223 residues: Riboflavin kinase (223 aa).

The interval 1–89 (MHRINALKHL…KHIFCGDEDK (89 aa)) is unknown. The interval 90–223 (VELYGNVITG…IMIEDRSACE (134 aa)) is riboflavin kinase. 99–104 (GLGEGQ) lines the CDP pocket. 2 residues coordinate Mg(2+): Thr-128 and Asn-130. Residues Ser-185 and Glu-193 each contribute to the FMN site. 198–201 (VHLR) contributes to the CDP binding site.

Belongs to the archaeal riboflavin kinase family. It depends on Mg(2+) as a cofactor.

The catalysed reaction is riboflavin + CTP = CDP + FMN + H(+). It functions in the pathway cofactor biosynthesis; FMN biosynthesis; FMN from riboflavin (CTP route): step 1/1. Catalyzes the CTP-dependent phosphorylation of riboflavin (vitamin B2) to form flavin mononucleotide (FMN). The protein is Riboflavin kinase (ribK) of Methanococcoides burtonii (strain DSM 6242 / NBRC 107633 / OCM 468 / ACE-M).